The sequence spans 293 residues: Small ribosomal subunit biogenesis GTPase RsgA (293 aa).

A CP-type G domain is found at 63–223; it reads QNELVRPPIA…VADTPGFSAL (161 aa). GTP-binding positions include 112-115 and 166-174; these read SKID and GQSGVGKSS. The Zn(2+) site is built by cysteine 247, cysteine 252, histidine 254, and cysteine 260.

This sequence belongs to the TRAFAC class YlqF/YawG GTPase family. RsgA subfamily. In terms of assembly, monomer. Associates with 30S ribosomal subunit, binds 16S rRNA. Zn(2+) is required as a cofactor.

The protein resides in the cytoplasm. Its function is as follows. One of several proteins that assist in the late maturation steps of the functional core of the 30S ribosomal subunit. Helps release RbfA from mature subunits. May play a role in the assembly of ribosomal proteins into the subunit. Circularly permuted GTPase that catalyzes slow GTP hydrolysis, GTPase activity is stimulated by the 30S ribosomal subunit. The chain is Small ribosomal subunit biogenesis GTPase RsgA from Geobacillus kaustophilus (strain HTA426).